The chain runs to 292 residues: G1/S-specific cyclin-D3 (292 aa).

Positions 27–152 constitute a Cyclin N-terminal domain; the sequence is VLQSLLRLEE…LVLGKLKWDL (126 aa). The tract at residues 254 to 292 is disordered; the sequence is SLREASQTSSSPAPKAPRGSSSQGPSQTSTPTDVTAIHL. A phosphoserine mark is found at Ser264 and Ser279. Residues 272–285 show a composition bias toward low complexity; it reads GSSSQGPSQTSTPT. Thr283 is modified (phosphothreonine).

The protein belongs to the cyclin family. Cyclin D subfamily. In terms of assembly, interacts with the CDK4 and CDK6 protein kinases to form a serine/threonine kinase holoenzyme complex. The cyclin subunit imparts substrate specificity to the complex. Interacts with ATF5. Interacts with EIF3K. Component of the ternary complex cyclin D/CDK4/CDKN1B required for nuclear translocation and modulation of CDK4-mediated kinase activity. Can form similar complexes with either CDKN1A or CDKN2A. Post-translationally, phosphorylation at Thr-283 by MAP kinases is required for ubiquitination and degradation by the DCX(AMBRA1) complex. In terms of processing, ubiquitinated by the DCX(AMBRA1) complex during the transition from G1 to S cell phase, leading to its degradation: ubiquitination is dependent on Thr-283 phosphorylation. The DCX(AMBRA1) complex represents the major regulator of CCND3 stability during the G1/S transition. Polyubiquitinated by the SCF(FBXL2) complex, leading to proteasomal degradation.

It localises to the nucleus. Its subcellular location is the cytoplasm. In terms of biological role, regulatory component of the cyclin D3-CDK4 (DC) complex that phosphorylates and inhibits members of the retinoblastoma (RB) protein family including RB1 and regulates the cell-cycle during G(1)/S transition. Phosphorylation of RB1 allows dissociation of the transcription factor E2F from the RB/E2F complex and the subsequent transcription of E2F target genes which are responsible for the progression through the G(1) phase. Hypophosphorylates RB1 in early G(1) phase. Cyclin D-CDK4 complexes are major integrators of various mitogenenic and antimitogenic signals. Component of the ternary complex, cyclin D3/CDK4/CDKN1B, required for nuclear translocation and activity of the cyclin D-CDK4 complex. Shows transcriptional coactivator activity with ATF5 independently of CDK4. The polypeptide is G1/S-specific cyclin-D3 (Homo sapiens (Human)).